The chain runs to 558 residues: MDIKRTVLWVIFFMSAVMLFDNWQRSHGRPSMFFPNVTQTNTASNATNGNGASGASAAAAANALPAAATGAAPATTAPAAQAQLVRFSTDVYNGEIDTRGGTLAKLTLTKAGDGKQPDLSVTLFDHTANHTYLARTGLLGGDFPNHNDVYAQVAGPTSLAADQNTLKLSFESPVKGGVKVVKTYTFTRGSYVIGVDTKIENVGAAPVTPSVYMELVRDNSSVETPMFSHTFLGPAVYTDQKHFQKITFGDIDKNKADYVTSADNGWIAMVQHYFASAWIPQSGAKRDIYVEKIDPTLYRVGVKQPVAAIAPGQSADVSARLFAGPEEERMLEGIAPGLELVKDYGWVTIIAKPLFWLLEKIHGFVGNWGWAIVLLTLLIKAVFFPLSAASYKSMARMKEITPRMQALRERFKSDPQKMNAALMELYKTEKVNPFGGCLPVVIQIPVFISLYWVLLASVEMRGAPWVLWIHDLSQRDPYFILPVLMAVSMFVQTKLNPTPPDPVQAKMMMFMPIAFSVMFFFFPAGLVLYYVVNNVLSIAQQYYITRTLGGAAAKKKAS.

Helical transmembrane passes span 3 to 23 (IKRT…FDNW), 364 to 384 (FVGN…AVFF), 438 to 458 (LPVV…LASV), 477 to 497 (PYFI…KLNP), and 508 to 528 (MMFM…GLVL).

The protein belongs to the OXA1/ALB3/YidC family. Type 1 subfamily. Interacts with the Sec translocase complex via SecD. Specifically interacts with transmembrane segments of nascent integral membrane proteins during membrane integration.

The protein localises to the cell inner membrane. Required for the insertion and/or proper folding and/or complex formation of integral membrane proteins into the membrane. Involved in integration of membrane proteins that insert both dependently and independently of the Sec translocase complex, as well as at least some lipoproteins. Aids folding of multispanning membrane proteins. This Burkholderia pseudomallei (strain K96243) protein is Membrane protein insertase YidC.